Consider the following 452-residue polypeptide: MPLPIVAIIGRPNVGKSTLANRLAGDQHAIVHDEPGITRDRTYRPGFWQDRDFQIVDTGGLVFDDDTEFLPLIREQSLAALNEASAAIFVVDGQTGPTTGDLEIADWLRQQPVPVLLAVNKCESPELGLIQATQFWELGLGNPYPISGIHGNGTGELLDDLITYLPPPEEITQSDEIKVAIIGRPNVGKSSLLNALLGENRAIVSPISGTTRDAIDTVIQHNEQTYRLIDTAGIRRKKNVEYGAEFFSINRAFKAIRRCDVVLFVIDAIDGVTDQDLKLADRIIEEGRSVVLVINKWDAVDKDSYTIYEYKTNIFSRLYFMEWAPIIFVSAMTGQRVNKILELVNSSTEEHRRRVTTAVINEVLQEAVTWHSPPTTRQGKQGKIYYGTQVSTQPPTIALFVNDPKRFNENYRRYIESQFRKQLGFPGTPIRLLWRGKKVREVEQSANRATKV.

EngA-type G domains are found at residues 4 to 169 (PIVA…PPPE) and 177 to 352 (IKVA…EEHR). Residues 10–17 (GRPNVGKS), 57–61 (DTGGL), 120–123 (NKCE), 183–190 (GRPNVGKS), 230–234 (DTAGI), and 295–298 (NKWD) each bind GTP. One can recognise a KH-like domain in the interval 353 to 438 (RRVTTAVINE…PIRLLWRGKK (86 aa)).

This sequence belongs to the TRAFAC class TrmE-Era-EngA-EngB-Septin-like GTPase superfamily. EngA (Der) GTPase family. Associates with the 50S ribosomal subunit.

GTPase that plays an essential role in the late steps of ribosome biogenesis. This is GTPase Der from Rippkaea orientalis (strain PCC 8801 / RF-1) (Cyanothece sp. (strain PCC 8801)).